A 500-amino-acid polypeptide reads, in one-letter code: Cytochrome P450 monooxygenase ausR (500 aa).

A helical membrane pass occupies residues 15 to 35 (GVGLYILWTVAVLFVIFKLLA). Cys439 contributes to the heme binding site.

The protein belongs to the cytochrome P450 family. The cofactor is heme.

Its subcellular location is the membrane. It participates in secondary metabolite biosynthesis; terpenoid biosynthesis. Its function is as follows. Cytochrome P450 monooxygenase; part of the gene cluster that mediates the biosynthesis of calidodehydroaustin, a fungal meroterpenoid. The first step of the pathway is the synthesis of 3,5-dimethylorsellinic acid by the polyketide synthase ausA. 3,5-dimethylorsellinic acid is then prenylated by the polyprenyl transferase ausN. Further epoxidation by the FAD-dependent monooxygenase ausM and cyclization by the probable terpene cyclase ausL lead to the formation of protoaustinoid A. Protoaustinoid A is then oxidized to spiro-lactone preaustinoid A3 by the combined action of the FAD-binding monooxygenases ausB and ausC, and the dioxygenase ausE. Acid-catalyzed keto-rearrangement and ring contraction of the tetraketide portion of preaustinoid A3 by ausJ lead to the formation of preaustinoid A4. The aldo-keto reductase ausK, with the help of ausH, is involved in the next step by transforming preaustinoid A4 into isoaustinone which is in turn hydroxylated by the P450 monooxygenase ausI to form austinolide. The cytochrome P450 monooxygenase ausG modifies austinolide to austinol. Austinol is further acetylated to austin by the O-acetyltransferase ausP, which spontaneously changes to dehydroaustin. The cytochrome P450 monooxygenase ausR then converts dehydroaustin is into 7-dehydrodehydroaustin. The hydroxylation catalyzed by ausR permits the O-acetyltransferase ausQ to add an additional acetyl group to the molecule, leading to the formation of acetoxydehydroaustin. The short chain dehydrogenase ausT catalyzes the reduction of the double bond present between carbon atoms 1 and 2 to convert 7-dehydrodehydroaustin into 1,2-dihydro-7-hydroxydehydroaustin. AusQ catalyzes not only an acetylation reaction but also the addition of the PKS ausV diketide product to 1,2-dihydro-7-hydroxydehydroaustin, forming precalidodehydroaustin. Finally, the iron/alpha-ketoglutarate-dependent dioxygenase converts precalidodehydroaustin into calidodehydroaustin. The protein is Cytochrome P450 monooxygenase ausR of Aspergillus calidoustus.